Consider the following 544-residue polypeptide: Chaperonin GroEL (544 aa).

Residues 30–33 (TLGP), Lys51, 87–91 (DGTTT), Gly415, 479–481 (NAA), and Asp495 contribute to the ATP site.

The protein belongs to the chaperonin (HSP60) family. In terms of assembly, forms a cylinder of 14 subunits composed of two heptameric rings stacked back-to-back. Interacts with the co-chaperonin GroES.

The protein localises to the cytoplasm. The enzyme catalyses ATP + H2O + a folded polypeptide = ADP + phosphate + an unfolded polypeptide.. Functionally, together with its co-chaperonin GroES, plays an essential role in assisting protein folding. The GroEL-GroES system forms a nano-cage that allows encapsulation of the non-native substrate proteins and provides a physical environment optimized to promote and accelerate protein folding. This is Chaperonin GroEL from Acinetobacter baylyi (strain ATCC 33305 / BD413 / ADP1).